We begin with the raw amino-acid sequence, 135 residues long: Class I hydrophobin 2 (135 aa).

Positions 1-20 (MFARLTSTLFALAAVSAVFA) are cleaved as a signal peptide. 4 cysteine pairs are disulfide-bonded: Cys29–Cys114, Cys36–Cys107, Cys37–Cys73, and Cys115–Cys128. 2 N-linked (GlcNAc...) asparagine glycosylation sites follow: Asn117 and Asn132.

The protein belongs to the fungal hydrophobin family. In terms of assembly, self-assembles to form functional amyloid fibrils called rodlets. Self-assembly into fibrillar rodlets occurs spontaneously at hydrophobic:hydrophilic interfaces and the rodlets further associate laterally to form amphipathic monolayers.

The protein localises to the secreted. Its subcellular location is the cell wall. Its function is as follows. Aerial growth, conidiation, and dispersal of filamentous fungi in the environment rely upon a capability of their secreting small amphipathic proteins called hydrophobins (HPBs) with low sequence identity. Class I can self-assemble into an outermost layer of rodlet bundles on aerial cell surfaces, conferring cellular hydrophobicity that supports fungal growth, development and dispersal; whereas Class II form highly ordered films at water-air interfaces through intermolecular interactions but contribute nothing to the rodlet structure. This Coprinopsis cinerea (strain Okayama-7 / 130 / ATCC MYA-4618 / FGSC 9003) (Inky cap fungus) protein is Class I hydrophobin 2.